The primary structure comprises 565 residues: Mitochondrial distribution and morphology protein 34 (565 aa).

The SMP-LTD domain occupies Met-1–Leu-195. Disordered stretches follow at residues Glu-207–Leu-236, Pro-296–Thr-317, and Ser-348–Pro-504. The segment covering Arg-358 to Arg-370 has biased composition (basic residues). Residues Val-371–Glu-381 show a composition bias toward basic and acidic residues. Polar residues predominate over residues Ser-382 to Ser-401. 2 stretches are compositionally biased toward basic and acidic residues: residues Leu-446–Val-472 and Ile-483–Glu-496.

The protein belongs to the MDM34 family. In terms of assembly, component of the ER-mitochondria encounter structure (ERMES) or MDM complex, composed of mmm1, mdm10, mdm12 and mdm34.

The protein resides in the mitochondrion outer membrane. Functionally, component of the ERMES/MDM complex, which serves as a molecular tether to connect the endoplasmic reticulum (ER) and mitochondria. Components of this complex are involved in the control of mitochondrial shape and protein biogenesis, and function in nonvesicular lipid trafficking between the ER and mitochondria. Mdm34 is required for the interaction of the ER-resident membrane protein mmm1 and the outer mitochondrial membrane-resident beta-barrel protein mdm10. In Aspergillus terreus (strain NIH 2624 / FGSC A1156), this protein is Mitochondrial distribution and morphology protein 34.